Reading from the N-terminus, the 243-residue chain is DNA repair protein RecO (243 aa).

This sequence belongs to the RecO family.

Functionally, involved in DNA repair and RecF pathway recombination. This chain is DNA repair protein RecO, found in Vibrio vulnificus (strain CMCP6).